Here is a 185-residue protein sequence, read N- to C-terminus: MGQQVLKSANEKMEKAVAAYSRELATVRAGRANASVLDKVQVDYYGAPTPVVQLANITVPEARLLVIQPYDKTSIGDIEKAILKADLGLNPSNDGTVIRIAFPALTEERRRDLVKVVKKYAEEAKVAVRNVRRDGNDDLKKLEKAGEITEDDLRGYTEDIQKETDKYIAKVDEIAKNKEKEIMEV.

Belongs to the RRF family.

The protein localises to the cytoplasm. Responsible for the release of ribosomes from messenger RNA at the termination of protein biosynthesis. May increase the efficiency of translation by recycling ribosomes from one round of translation to another. This chain is Ribosome-recycling factor, found in Bacillus cereus (strain ATCC 10987 / NRS 248).